The chain runs to 989 residues: SWI/SNF-related matrix-associated actin-dependent regulator of chromatin subfamily A containing DEAD/H box 1 homolog (989 aa).

The interval 1–288 is disordered; sequence MSTTSDFQTG…RRAKRGETKN (288 aa). The segment covering 72-105 has biased composition (acidic residues); the sequence is DDDDEDYVDETMPSEDEEDFDNNEEDEDDDDYEE. Positions 109–120 are enriched in basic residues; it reads RKRKAPSKKKLV. Residues 124–140 show a composition bias toward basic and acidic residues; it reads ENYRREDSETPEPEMKR. The span at 187 to 200 shows a compositional bias: acidic residues; sequence DDESEDDFINDEEI. 2 stretches are compositionally biased toward basic and acidic residues: residues 201–221 and 241–250; these read SEKG…GKDS and AQKEQKKKAE. A compositionally biased stretch (acidic residues) spans 251–276; that stretch reads SDEDWEEDEDDMNADGDETPSDDSDI. Basic and acidic residues predominate over residues 277 to 288; the sequence is EERRAKRGETKN. Residues 406 to 574 enclose the Helicase ATP-binding domain; sequence IMMYNKDLNA…ISLMYFVLSK (169 aa). 419–426 contributes to the ATP binding site; sequence DEMGLGKT. The DEGH box signature appears at 525–528; the sequence is DEGH. The Helicase C-terminal domain occupies 757–912; sequence QLDVMLPEIQ…GVKGQLDEDA (156 aa). Residues 941-989 are disordered; that stretch reads RYDDVEDDSGDSKNGIDAEEAAKKEDEAVKEPVEKEQQKEEESQPSTSA. Basic and acidic residues predominate over residues 950-982; the sequence is GDSKNGIDAEEAAKKEDEAVKEPVEKEQQKEEE.

It belongs to the SNF2/RAD54 helicase family.

It is found in the nucleus. The protein resides in the chromosome. It catalyses the reaction ATP + H2O = ADP + phosphate + H(+). In terms of biological role, DNA helicase that possesses intrinsic ATP-dependent nucleosome-remodeling activity and is both required for DNA repair and heterochromatin organization. Promotes DNA end resection of double-strand breaks (DSBs) following DNA damage: probably acts by weakening histone DNA interactions in nucleosomes flanking DSBs. This is SWI/SNF-related matrix-associated actin-dependent regulator of chromatin subfamily A containing DEAD/H box 1 homolog from Caenorhabditis elegans.